A 361-amino-acid chain; its full sequence is Phosphoserine aminotransferase (361 aa).

Residue Arg-42 participates in L-glutamate binding. Residues Ala-76 to Thr-77, Trp-102, Thr-152, Asp-172, and Gln-195 each bind pyridoxal 5'-phosphate. The residue at position 196 (Lys-196) is an N6-(pyridoxal phosphate)lysine. Asn-237 to Thr-238 contributes to the pyridoxal 5'-phosphate binding site.

Belongs to the class-V pyridoxal-phosphate-dependent aminotransferase family. SerC subfamily. As to quaternary structure, homodimer. Pyridoxal 5'-phosphate is required as a cofactor.

It is found in the cytoplasm. The enzyme catalyses O-phospho-L-serine + 2-oxoglutarate = 3-phosphooxypyruvate + L-glutamate. The catalysed reaction is 4-(phosphooxy)-L-threonine + 2-oxoglutarate = (R)-3-hydroxy-2-oxo-4-phosphooxybutanoate + L-glutamate. It functions in the pathway amino-acid biosynthesis; L-serine biosynthesis; L-serine from 3-phospho-D-glycerate: step 2/3. It participates in cofactor biosynthesis; pyridoxine 5'-phosphate biosynthesis; pyridoxine 5'-phosphate from D-erythrose 4-phosphate: step 3/5. Its function is as follows. Catalyzes the reversible conversion of 3-phosphohydroxypyruvate to phosphoserine and of 3-hydroxy-2-oxo-4-phosphonooxybutanoate to phosphohydroxythreonine. This is Phosphoserine aminotransferase from Xanthomonas axonopodis pv. citri (strain 306).